The sequence spans 459 residues: Biphenyl dioxygenase subunit alpha (459 aa).

In terms of domain architecture, Rieske spans 58-156 (WLLLGHESHV…KEGDCGFDKA (99 aa)). 4 residues coordinate [2Fe-2S] cluster: Cys-100, His-102, Cys-120, and His-123. His-233 and His-239 together coordinate Fe cation.

Belongs to the bacterial ring-hydroxylating dioxygenase alpha subunit family. As to quaternary structure, heterohexamer consisting of three BphA subunits and three BphE subunits. A ferredoxin (BphF) and a ferredoxin reductase (BphG) must be present to obtain activity. It depends on [2Fe-2S] cluster as a cofactor. The cofactor is Fe cation.

The catalysed reaction is biphenyl + NADH + O2 + H(+) = (2R,3S)-3-phenylcyclohexa-3,5-diene-1,2-diol + NAD(+). Its pathway is xenobiotic degradation; biphenyl degradation; 2-hydroxy-2,4-pentadienoate and benzoate from biphenyl: step 1/4. The sequence is that of Biphenyl dioxygenase subunit alpha (bphA) from Paraburkholderia xenovorans (strain LB400).